Consider the following 615-residue polypeptide: Nuclear receptor subfamily 1 group D member 1 (615 aa).

Positions 1–12 (MTTLDSNNNTGG) are enriched in polar residues. A required for phosphorylation by CSNK1E and cytoplasmic localization region spans residues 1-70 (MTTLDSNNNT…TQDPARSFGS (70 aa)). The tract at residues 1–120 (MTTLDSNNNT…SSRVSPSKGT (120 aa)) is disordered. Residues 1-129 (MTTLDSNNNT…TSNITKLNGM (129 aa)) form a modulating region. Residues 14–34 (ITYIGSSGSSPSRTSPESLYS) show a composition bias toward low complexity. Over residues 35–48 (DSSNGSFQSLTQGC) the composition is skewed to polar residues. Residues 49–285 (PTYFPPSPTG…PPRSPSPEPT (237 aa)) are crucial for activation of GJA1. Phosphoserine; by GSK3-beta is present on residues S55 and S59. Over residues 70–94 (SAPPSLSDDSSPSSASSSSSSSSSS) the composition is skewed to low complexity. The segment at residues 130-206 (VLLCKVCGDV…VGMSRDAVRF (77 aa)) is a DNA-binding region (nuclear receptor). NR C4-type zinc fingers lie at residues 133 to 153 (CKVCGDVASGFHYGVHACEGC) and 170 to 194 (CLKNENCSIVRINRNRCQQCRFKKC). Residues K192 and K193 each carry the N6-acetyllysine; by KAT5 modification. Disordered stretches follow at residues 235–286 (LCPL…EPTM) and 312–337 (PGNFNANHASGSPSATTPHRWESQGC). Over residues 240–252 (TSPTPHPTSGSMG) the composition is skewed to low complexity. Residues 253-262 (PSPPPAPAPT) are compositionally biased toward pro residues. T275 carries the phosphothreonine; by CDK1 modification. Positions 285–615 (TMEDVISQVA…KLLSFRVDAQ (331 aa)) constitute an NR LBD domain. The span at 312-328 (PGNFNANHASGSPSATT) shows a compositional bias: polar residues. Residue C419 participates in heme binding. At K592 the chain carries N6-acetyllysine. Heme is bound at residue H603.

The protein belongs to the nuclear hormone receptor family. NR1 subfamily. As to quaternary structure, binds DNA as a monomer or a homodimer. Interacts with NR2E3 and ZNHIT1. Interacts with C1D. Interacts with SP1. Interacts with OPHN1 (via C-terminus). Interacts with PER2; the interaction associates PER2 to BMAL1 promoter region. Interacts with CRY1. Interacts with CCAR2. Interacts with SIAH2. Interacts with FBXW7 and CDK1. Interacts with HUWE1. Interacts with NR0B2. Interacts with NFIL3. Interacts (via domain NR LBD) with HSP90AA1 and HSP90AB1. Post-translationally, ubiquitinated, leading to its proteasomal degradation. Ubiquitinated by the SCF(FBXW7) complex when phosphorylated by CDK1 leading to its proteasomal degradation. Ubiquitinated by SIAH2; leading to its proteasomal degradation. Rapidly ubiquitinated in response to inflammatory triggers and sumoylation is a prerequisite to its ubiquitination. In terms of processing, sumoylated by UBE2I, desumoylated by SENP1, and sumoylation is a prerequisite to its ubiquitination. Phosphorylated by CSNK1E; phosphorylation enhances its cytoplasmic localization. Post-translationally, undergoes lysosome-mediated degradation in a time-dependent manner in the liver. Expressed during adipocyte differentiation (at protein level). Expressed in skeletal muscle, bladder, lumbar spinal cord, pancreatic islets and hypothalamus. Expressed in developing and adult retina. In the adult retina, predominantly expressed in the outer nuclear layer, where rod and cone cells reside, and also localized to the ganglion cell layer. Expressed in a circadian manner in the liver. Expressed in a circadian manner in the lung with a peak between ZT8 and ZT12.

It localises to the nucleus. The protein localises to the cytoplasm. The protein resides in the cell projection. It is found in the dendrite. Its subcellular location is the dendritic spine. Transcriptional repressor which coordinates circadian rhythm and metabolic pathways in a heme-dependent manner. Integral component of the complex transcription machinery that governs circadian rhythmicity and forms a critical negative limb of the circadian clock by directly repressing the expression of core clock components BMAL1, CLOCK and CRY1. Also regulates genes involved in metabolic functions, including lipid and bile acid metabolism, adipogenesis, gluconeogenesis and the macrophage inflammatory response. Acts as a receptor for heme which stimulates its interaction with the NCOR1/HDAC3 corepressor complex, enhancing transcriptional repression. Recognizes two classes of DNA response elements within the promoter of its target genes and can bind to DNA as either monomers or homodimers, depending on the nature of the response element. Binds as a monomer to a response element composed of the consensus half-site motif 5'-[A/G]GGTCA-3' preceded by an A/T-rich 5' sequence (RevRE), or as a homodimer to a direct repeat of the core motif spaced by two nucleotides (RevDR-2). Acts as a potent competitive repressor of ROR alpha (RORA) function and regulates the levels of its ligand heme by repressing the expression of PPARGC1A, a potent inducer of heme synthesis. Regulates lipid metabolism by repressing the expression of APOC3 and by influencing the activity of sterol response element binding proteins (SREBPs); represses INSIG2 which interferes with the proteolytic activation of SREBPs which in turn govern the rhythmic expression of enzymes with key functions in sterol and fatty acid synthesis. Regulates gluconeogenesis via repression of G6PC1 and PEPCK and adipocyte differentiation via repression of PPARG. Regulates glucagon release in pancreatic alpha-cells via the AMPK-NAMPT-SIRT1 pathway and the proliferation, glucose-induced insulin secretion and expression of key lipogenic genes in pancreatic-beta cells. Positively regulates bile acid synthesis by increasing hepatic expression of CYP7A1 via repression of NR0B2 and NFIL3 which are negative regulators of CYP7A1. Modulates skeletal muscle oxidative capacity by regulating mitochondrial biogenesis and autophagy; controls mitochondrial biogenesis and respiration by interfering with the STK11-PRKAA1/2-SIRT1-PPARGC1A signaling pathway. Represses the expression of SERPINE1/PAI1, an important modulator of cardiovascular disease and the expression of inflammatory cytokines and chemokines in macrophages. Represses gene expression at a distance in macrophages by inhibiting the transcription of enhancer-derived RNAs (eRNAs). Plays a role in the circadian regulation of body temperature and negatively regulates thermogenic transcriptional programs in brown adipose tissue (BAT); imposes a circadian oscillation in BAT activity, increasing body temperature when awake and depressing thermogenesis during sleep. In concert with NR2E3, regulates transcriptional networks critical for photoreceptor development and function. In addition to its activity as a repressor, can also act as a transcriptional activator. In the ovarian granulosa cells acts as a transcriptional activator of STAR which plays a role in steroid biosynthesis. In collaboration with SP1, activates GJA1 transcription in a heme-independent manner. Represses the transcription of CYP2B10, CYP4A10 and CYP4A14. Represses the transcription of CES2. Represses and regulates the circadian expression of TSHB in a NCOR1-dependent manner. Negatively regulates the protein stability of NR3C1 and influences the time-dependent subcellular distribution of NR3C1, thereby affecting its transcriptional regulatory activity. Plays a critical role in the circadian control of neutrophilic inflammation in the lung; under resting, non-stress conditions, acts as a rhythmic repressor to limit inflammatory activity whereas in the presence of inflammatory triggers undergoes ubiquitin-mediated degradation thereby relieving inhibition of the inflammatory response. Plays a key role in the circadian regulation of microglial activation and neuroinflammation; suppresses microglial activation through the NF-kappaB pathway in the central nervous system. Plays a role in the regulation of the diurnal rhythms of lipid and protein metabolism in the skeletal muscle via transcriptional repression of genes controlling lipid and amino acid metabolism in the muscle. In Mus musculus (Mouse), this protein is Nuclear receptor subfamily 1 group D member 1 (Nr1d1).